Reading from the N-terminus, the 247-residue chain is Tetraspanin-18 (247 aa).

At 1–15 (MEGDCLSCMKYLMFL) the chain is on the cytoplasmic side. Residues 16–36 (FNFFIFLGGACLLGVGIWVIV) form a helical membrane-spanning segment. At 37–49 (DPTGFREIVAANP) the chain is on the extracellular side. A helical membrane pass occupies residues 50 to 70 (LLFTGAYIMLAMGAMLFLLGF). The Cytoplasmic segment spans residues 71 to 82 (LGCCGAIRENKC). A helical membrane pass occupies residues 83–103 (LLLFFFMFILLIFLAELSAAI). The Extracellular portion of the chain corresponds to 104–222 (LAFIFRENLT…SFETYVYLAG (119 aa)). N-linked (GlcNAc...) asparagine glycans are attached at residues Asn-111 and Asn-129. The helical transmembrane segment at 223–243 (ALAIGVLAIELFAMIFAMCLF) threads the bilayer. Topologically, residues 244-247 (RGIQ) are cytoplasmic.

Belongs to the tetraspanin (TM4SF) family.

Its subcellular location is the membrane. Maintains CDH6 protein and promotes CDH6-dependent adherens junctions, inhibiting neural crest migration. The sequence is that of Tetraspanin-18 from Gallus gallus (Chicken).